A 442-amino-acid polypeptide reads, in one-letter code: Transcription factor MYCFIDRAFT_198930 (442 aa).

The interval 1-34 (MSTTPMAAPPGADLKPVTSSRGRSSTSDEQKLRS) is disordered. Residues 36 to 63 (CESCAQSKLKCSGDKPACARCAKRGLAC) constitute a DNA-binding region (zn(2)-C6 fungal-type). Positions 74–107 (KPKGYTSTNDNNPSKRREDSHSPAASQWSSTGHL) are disordered. A compositionally biased stretch (polar residues) spans 96–107 (PAASQWSSTGHL).

It is found in the nucleus. Its function is as follows. Transcription factor that positively regulates the expression of the gene cluster that mediates the biosynthesis of an emodin derivative that may be involved in black Sigatoka disease of banana. The polypeptide is Transcription factor MYCFIDRAFT_198930 (Pseudocercospora fijiensis (strain CIRAD86) (Black leaf streak disease fungus)).